A 43-amino-acid polypeptide reads, in one-letter code: Neurotrophic factor BDNF (43 aa).

It belongs to the NGF-beta family.

It localises to the secreted. Promotes the survival of neuronal populations that are all located either in the central nervous system or directly connected to it. In Macrovipera lebetinus (Levantine viper), this protein is Neurotrophic factor BDNF (BDNF).